The following is a 37-amino-acid chain: Large ribosomal subunit protein bL36 (37 aa).

Belongs to the bacterial ribosomal protein bL36 family.

This is Large ribosomal subunit protein bL36 from Synechococcus sp. (strain CC9605).